Consider the following 459-residue polypeptide: GTPase Der (459 aa).

2 consecutive EngA-type G domains span residues 4–169 and 179–355; these read PLVA…PEVT and IAVS…AAHR. Residues 10-17, 57-61, 120-123, 185-192, 232-236, and 297-300 each bind GTP; these read GRPNVGKS, DTGGL, NKCE, DTAGI, and NKWD. Residues 356-441 form the KH-like domain; that stretch reads KRVPTAVVNE…PIRFLWRGKS (86 aa).

It belongs to the TRAFAC class TrmE-Era-EngA-EngB-Septin-like GTPase superfamily. EngA (Der) GTPase family. Associates with the 50S ribosomal subunit.

Functionally, GTPase that plays an essential role in the late steps of ribosome biogenesis. This is GTPase Der from Synechococcus sp. (strain JA-2-3B'a(2-13)) (Cyanobacteria bacterium Yellowstone B-Prime).